We begin with the raw amino-acid sequence, 521 residues long: Importin subunit alpha-4 (521 aa).

Residues 1–29 (MAENPGLENHRIKSFKNKGRDVETMRRHR) form a disordered region. Ala-2 carries the post-translational modification N-acetylalanine. The IBB domain maps to 2 to 58 (AENPGLENHRIKSFKNKGRDVETMRRHRNEVTVELRKNKRDEHLLKKRNVPQEESLE). Basic and acidic residues predominate over residues 18–29 (KGRDVETMRRHR). The Nuclear localization signal signature appears at 43–52 (EHLLKKRNVP). Phosphoserine occurs at positions 56 and 60. An ARM 1; truncated repeat occupies 66–106 (FKAQNVTLEAILQNATSDNPVVQLSAVQAARKLLSSDRNPP). ARM repeat units follow at residues 107 to 149 (IDDL…TSAQ), 150 to 194 (TQAV…CRDY), 195 to 233 (VISL…NKDP), 234 to 278 (PPPM…EQIQ), 279 to 318 (MVID…TDEQ), 319 to 360 (TQVV…NQQQ), 361 to 400 (VQAV…ISGR), and 401 to 443 (KDQV…IMAG). The segment at 137-229 (WALTNIASGT…VTWVIVNLCR (93 aa)) is NLS binding site (major). The segment at 306–394 (RAVGNIVTGT…QKEAAWAISN (89 aa)) is NLS binding site (minor). One copy of the ARM 10; atypical repeat lies at 447–485 (STIAEIIEECGGLEKIEVLQQHENEDIYKLAFEIIDQYF). Tyr-484 carries the phosphotyrosine modification.

Belongs to the importin alpha family. In terms of assembly, forms a complex with importin subunit beta-1. Interacts with DDX21. Interacts with NCBP1, NCBP2/CBP20 and NCBP3. Interacts with RCC1. Interacts with ZC3H11A. Detected more or less in all tissues examined (Ehrlich ascites tumor cells, testis, kidney, spleen, liver, heart, lung, thymus, skeletal muscle, cerebellum and brain (without cerebellum)).

It localises to the cytoplasm. The protein resides in the nucleus. In terms of biological role, functions in nuclear protein import as an adapter protein for nuclear receptor KPNB1. Binds specifically and directly to substrates containing either a simple or bipartite NLS motif. Docking of the importin/substrate complex to the nuclear pore complex (NPC) is mediated by KPNB1 through binding to nucleoporin FxFG repeats and the complex is subsequently translocated through the pore by an energy requiring, Ran-dependent mechanism. At the nucleoplasmic side of the NPC, Ran binds to importin-beta and the three components separate and importin-alpha and -beta are re-exported from the nucleus to the cytoplasm where GTP hydrolysis releases Ran from importin. The directionality of nuclear import is thought to be conferred by an asymmetric distribution of the GTP- and GDP-bound forms of Ran between the cytoplasm and nucleus. In vitro, mediates the nuclear import of human cytomegalovirus UL84 by recognizing a non-classical NLS. This is Importin subunit alpha-4 (Kpna3) from Mus musculus (Mouse).